We begin with the raw amino-acid sequence, 430 residues long: Aspartate--tRNA(Asp/Asn) ligase (430 aa).

Position 168 (glutamate 168) interacts with L-aspartate. Residues 190-193 are aspartate; that stretch reads QLYK. Residue arginine 212 coordinates L-aspartate. ATP is bound by residues 212-214, 220-222, and glutamate 353; these read RAE and RHL. The Mg(2+) site is built by glutamate 353 and serine 356. Positions 356 and 360 each coordinate L-aspartate. 401 to 404 is a binding site for ATP; it reads GAER.

Belongs to the class-II aminoacyl-tRNA synthetase family. Type 2 subfamily. In terms of assembly, homodimer. It depends on Mg(2+) as a cofactor.

It localises to the cytoplasm. The catalysed reaction is tRNA(Asx) + L-aspartate + ATP = L-aspartyl-tRNA(Asx) + AMP + diphosphate. Functionally, aspartyl-tRNA synthetase with relaxed tRNA specificity since it is able to aspartylate not only its cognate tRNA(Asp) but also tRNA(Asn). Reaction proceeds in two steps: L-aspartate is first activated by ATP to form Asp-AMP and then transferred to the acceptor end of tRNA(Asp/Asn). In Archaeoglobus fulgidus (strain ATCC 49558 / DSM 4304 / JCM 9628 / NBRC 100126 / VC-16), this protein is Aspartate--tRNA(Asp/Asn) ligase.